The primary structure comprises 481 residues: Zinc metalloproteinase/disintegrin (481 aa).

Residues Met-1 to Ser-20 form the signal peptide. A propeptide spanning residues Ile-21–Pro-189 is cleaved from the precursor. Glu-190 carries the pyrrolidone carboxylic acid (Glu) modification. Positions Arg-197–Pro-392 constitute a Peptidase M12B domain. An an L-amino acid tripeptide-binding site is contributed by Arg-296 to Ile-299. Cystine bridges form between Cys-308/Cys-387, Cys-349/Cys-371, and Cys-351/Cys-354. His-333 contacts Zn(2+). Glu-334 is an active-site residue. His-337 and His-343 together coordinate Zn(2+). Ser-357 contacts an L-amino acid tripeptide. A propeptide spanning residues Leu-393–Ala-410 is cleaved from the precursor. The Disintegrin domain maps to Thr-400–Gly-481. Disulfide bonds link Cys-414/Cys-429, Cys-416/Cys-424, Cys-423/Cys-446, Cys-437/Cys-443, Cys-442/Cys-467, and Cys-455/Cys-474. A Cell attachment site motif is present at residues Arg-459–Asp-461.

The protein belongs to the venom metalloproteinase (M12B) family. P-II subfamily. P-IIa sub-subfamily. In terms of assembly, monomer. Zn(2+) serves as cofactor. In terms of processing, the N-terminus is blocked. Expressed by the venom gland.

The protein localises to the secreted. Its activity is regulated as follows. Inhibited by EDTA and 1,10-phenanthroline. Is also inhibited by endogenous tripeptide inhibitors pyroGlu-Asn-Trp, pyroGlu-Gln-Trp, and pyroGlu-Lys-Trp. Its function is as follows. Potent fibrinogenolytic protease which cleaves mainly the Aalpha chain of fibrinogen (FGA) and slightly the Bbeta (FGB) and the gamma (FGG) chains. May possess hemorrhagic activity. Compared to other SVMP, the substrate-binding pocket is relatively shallow. Is less susceptible to tripeptide inhibitors than TM-1 (AC U3KRG1) and TM-2. Inhibits platelet aggregation induced by ADP, thrombin, platelet-activating factor and collagen. Acts by inhibiting fibrinogen interaction with platelet receptors GPIIb/GPIIIa (ITGA2B/ITGB3). The protein is Zinc metalloproteinase/disintegrin of Protobothrops mucrosquamatus (Taiwan habu).